A 249-amino-acid polypeptide reads, in one-letter code: Triosephosphate isomerase (249 aa).

Asn12 and Lys14 together coordinate substrate. The residue at position 14 (Lys14) is an N6-acetyllysine. Tyr68 carries the post-translational modification 3'-nitrotyrosine. Position 80 is a phosphoserine (Ser80). His96 (electrophile) is an active-site residue. At Ser106 the chain carries Phosphoserine. A Glycyl lysine isopeptide (Lys-Gly) (interchain with G-Cter in SUMO1) cross-link involves residue Lys142. Residue Lys149 is modified to N6-succinyllysine. Lys156 bears the N6-acetyllysine; alternate mark. Lys156 carries the N6-succinyllysine; alternate modification. The residue at position 159 (Ser159) is a Phosphoserine. Glu166 serves as the catalytic Proton acceptor. Thr173 is subject to Phosphothreonine. Lys194 carries the N6-acetyllysine; alternate modification. Position 194 is an N6-succinyllysine; alternate (Lys194). The residue at position 194 (Lys194) is an N6-methyllysine; alternate. Ser198 is subject to Phosphoserine. Tyr209 is subject to 3'-nitrotyrosine. Phosphoserine is present on Ser212. Thr214 is subject to Phosphothreonine. Position 223 is a phosphoserine (Ser223). The residue at position 238 (Lys238) is an N6-acetyllysine.

Belongs to the triosephosphate isomerase family. In terms of assembly, homodimer.

Its subcellular location is the cytoplasm. The catalysed reaction is dihydroxyacetone phosphate = methylglyoxal + phosphate. It carries out the reaction D-glyceraldehyde 3-phosphate = dihydroxyacetone phosphate. Its pathway is carbohydrate degradation; glycolysis; D-glyceraldehyde 3-phosphate from glycerone phosphate: step 1/1. It functions in the pathway carbohydrate biosynthesis; gluconeogenesis. Triosephosphate isomerase is an extremely efficient metabolic enzyme that catalyzes the interconversion between dihydroxyacetone phosphate (DHAP) and D-glyceraldehyde-3-phosphate (G3P) in glycolysis and gluconeogenesis. Its function is as follows. It is also responsible for the non-negligible production of methylglyoxal a reactive cytotoxic side-product that modifies and can alter proteins, DNA and lipids. In Bos taurus (Bovine), this protein is Triosephosphate isomerase (TPI1).